A 224-amino-acid chain; its full sequence is Ribonuclease HII (224 aa).

The region spanning 21 to 223 is the RNase H type-2 domain; that stretch reads RAIAGIDEAG…IRNAALEGEQ (203 aa). 3 residues coordinate a divalent metal cation: D27, E28, and D124.

The protein belongs to the RNase HII family. Requires Mn(2+) as cofactor. It depends on Mg(2+) as a cofactor.

It is found in the cytoplasm. The enzyme catalyses Endonucleolytic cleavage to 5'-phosphomonoester.. Functionally, endonuclease that specifically degrades the RNA of RNA-DNA hybrids. The sequence is that of Ribonuclease HII from Roseiflexus castenholzii (strain DSM 13941 / HLO8).